The sequence spans 261 residues: L-erythrulose-1-phosphate isomerase (261 aa).

Residue His99 is the Electrophile of the active site. Glu172 serves as the catalytic Proton acceptor.

The protein belongs to the triosephosphate isomerase family.

The enzyme catalyses L-erythrulose 1-phosphate = D-erythrulose 4-phosphate. Its pathway is carbohydrate metabolism. Involved in catabolism of D-apiose. Catalyzes the isomerization of L-erythrulose 1-phosphate to D-erythrulose 4-phosphate. This is L-erythrulose-1-phosphate isomerase from Rhizobium rhizogenes (strain K84 / ATCC BAA-868) (Agrobacterium radiobacter).